We begin with the raw amino-acid sequence, 356 residues long: Histidinol-phosphate aminotransferase 2 (356 aa).

Position 214 is an N6-(pyridoxal phosphate)lysine (Lys214).

It belongs to the class-II pyridoxal-phosphate-dependent aminotransferase family. Histidinol-phosphate aminotransferase subfamily. As to quaternary structure, homodimer. The cofactor is pyridoxal 5'-phosphate.

It catalyses the reaction L-histidinol phosphate + 2-oxoglutarate = 3-(imidazol-4-yl)-2-oxopropyl phosphate + L-glutamate. It functions in the pathway amino-acid biosynthesis; L-histidine biosynthesis; L-histidine from 5-phospho-alpha-D-ribose 1-diphosphate: step 7/9. The sequence is that of Histidinol-phosphate aminotransferase 2 from Dechloromonas aromatica (strain RCB).